A 332-amino-acid chain; its full sequence is MKFQSTLLLAAAAGSALAVPHGPGHKKRASVFEWFGSNESGAEFGTNIPGVWGTDYIFPDPSAISTLIDKGMNFFRVQFMMERLLPDSMTGSYDEEYLANLTTVIKAVTDGGAHALVDPHNYGRYNGEIISSTSDFQTFWENLAGQYKDNDLVMFDTNNEYHDMDQDLVLNLNQAAINGIRAAGATSQYIFVEGNSWTGAWTWVDVNDNMKNLTDPEDKIVYEMHQYLDSDGSGTSETCVSETIGKERVTEATQWLKDNKKVGFIGEYAGGSNDVCRSAVSGMLEYMANNTDVWKGASWWAAGPWWGDYIFSMEPPDGTAYTGMLDILEAYL.

The first 18 residues, 1–18 (MKFQSTLLLAAAAGSALA), serve as a signal peptide directing secretion. 2 N-linked (GlcNAc...) asparagine glycosylation sites follow: N38 and N100. The Proton donor role is filled by E160. A glycan (N-linked (GlcNAc...) asparagine) is linked at N212. E267 serves as the catalytic Nucleophile. N289 is a glycosylation site (N-linked (GlcNAc...) asparagine).

The protein belongs to the glycosyl hydrolase 5 (cellulase A) family.

It is found in the secreted. The catalysed reaction is Endohydrolysis of (1-&gt;4)-beta-D-glucosidic linkages in cellulose, lichenin and cereal beta-D-glucans.. Has endoglucanase activity on substrates containing beta-1,4 glycosidic bonds, like in carboxymethylcellulose (CMC), hydroxyethylcellulose (HEC) and beta-glucan. Involved in the degradation of complex natural cellulosic substrates. The polypeptide is Probable endo-beta-1,4-glucanase B (eglB) (Aspergillus kawachii (strain NBRC 4308) (White koji mold)).